A 392-amino-acid chain; its full sequence is Major outer membrane porin (392 aa).

An N-terminal signal peptide occupies residues 1–22; it reads MKKLLKSALLFAAAGSALSLQA.

Belongs to the chlamydial porin (CP) (TC 1.B.2) family. Part of a disulfide cross-linked outer membrane complex (COMC) composed of the major outer membrane porin (MOMP), the small cysteine-rich protein (OmcA) and the large cysteine-rich periplasmic protein (OmcB).

The protein resides in the cell outer membrane. In terms of biological role, in elementary bodies (EBs, the infectious stage, which is able to survive outside the host cell) provides the structural integrity of the outer envelope through disulfide cross-links with the small cysteine-rich protein and the large cysteine-rich periplasmic protein. It has been described in publications as the Sarkosyl-insoluble COMC (Chlamydia outer membrane complex), and serves as the functional equivalent of peptidoglycan. Functionally, permits diffusion of specific solutes through the outer membrane. In Chlamydia psittaci (Chlamydophila psittaci), this protein is Major outer membrane porin (ompA).